A 253-amino-acid chain; its full sequence is Testis-expressed protein 101 (253 aa).

The first 24 residues, 1 to 24, serve as a signal peptide directing secretion; sequence MAACWVHYLLLLLLGVSHQTLAQS. 5 N-linked (GlcNAc...) asparagine glycosylation sites follow: asparagine 44, asparagine 112, asparagine 117, asparagine 121, and asparagine 162. The region spanning 53–117 is the UPAR/Ly6 1 domain; it reads ETCNPGELCQ…SNYCNSSLCN (65 aa). Residues 143–218 enclose the UPAR/Ly6 2 domain; the sequence is CPTCVALGSC…KETCSYHSLL (76 aa). Serine 226 carries GPI-anchor amidated serine lipidation. Residues 227 to 253 constitute a propeptide, removed in mature form; that stretch reads RASGRSTSLWVLELLLPAVLVALTHFP.

Interacts with VAMP3. Interacts with LY6K. Interacts with DPEP3; co-localized on the cell surface of spermatocytes, spermatids, and testicular spermatozoa, co-localized only in cytoplasmic droplets of caput and corpus epididymal sperm. Interacts with ADAM5. In terms of processing, N-glycosylated; by high mannose and/or biantennary complex and/or certain types of hybrid oligosaccharides; possesses different oligosaccharides chains according to its subcellular localization in the testis. Post-translationally, sheds from membrane raft by ACE and released from the cell surface of epididymal sperm while it passes through the caput epididymis leading to disappearance of TEX101 on spermatozoa; is essential to produce fertile spermatozoa.

Its subcellular location is the cell membrane. It is found in the membrane raft. It localises to the cytoplasmic vesicle. The protein resides in the secretory vesicle. The protein localises to the acrosome. Its subcellular location is the secreted. Functionally, plays a role in fertilization by controlling binding of sperm to zona pellucida and migration of spermatozoa into the oviduct. May play a role in signal transduction and promote protein tyrosine phosphorylation. This Cricetulus griseus (Chinese hamster) protein is Testis-expressed protein 101.